The chain runs to 1755 residues: Transposon Ty1-PR1 Gag-Pol polyprotein (1755 aa).

Polar residues-rich tracts occupy residues M1–S23, T48–S60, S71–Q93, and Q127–F152. Disordered regions lie at residues M1–Q93, P126–P173, and G352–T421. Residues T153–T165 are compositionally biased toward low complexity. An RNA-binding region spans residues N299–H401. Low complexity predominate over residues N402–S418. S416 is subject to Phosphoserine. The active-site For protease activity; shared with dimeric partner is the D461. Residues N583 to C640 form an integrase-type zinc finger-like region. In terms of domain architecture, Integrase catalytic spans N660–P835. Residues D671 and D736 each coordinate Mg(2+). Disordered stretches follow at residues S956–K1087, R1092–P1111, and D1130–T1187. The segment covering S960 to T969 has biased composition (low complexity). Over residues S1005–T1015 the composition is skewed to polar residues. Residues E1038–S1053 show a composition bias toward basic and acidic residues. Composition is skewed to polar residues over residues Y1054–D1082 and P1101–P1111. Residues K1178–R1212 carry the Bipartite nuclear localization signal motif. The region spanning N1338–Q1476 is the Reverse transcriptase Ty1/copia-type domain. 6 residues coordinate Mg(2+): D1346, D1427, D1428, D1610, E1652, and D1685. Positions D1610–K1752 constitute an RNase H Ty1/copia-type domain.

As to quaternary structure, the capsid protein forms a homotrimer, from which the VLPs are assembled. The protease is a homodimer, whose active site consists of two apposed aspartic acid residues. In terms of processing, initially, virus-like particles (VLPs) are composed of the structural unprocessed proteins Gag and Gag-Pol, and also contain the host initiator methionine tRNA (tRNA(i)-Met) which serves as a primer for minus-strand DNA synthesis, and a dimer of genomic Ty RNA. Processing of the polyproteins occurs within the particle and proceeds by an ordered pathway, called maturation. First, the protease (PR) is released by autocatalytic cleavage of the Gag-Pol polyprotein yielding capsid protein p45 and a Pol-p154 precursor protein. This cleavage is a prerequisite for subsequent processing of Pol-p154 at the remaining sites to release the mature structural and catalytic proteins. Maturation takes place prior to the RT reaction and is required to produce transposition-competent VLPs.

The protein localises to the cytoplasm. Its subcellular location is the nucleus. The enzyme catalyses DNA(n) + a 2'-deoxyribonucleoside 5'-triphosphate = DNA(n+1) + diphosphate. It carries out the reaction Endonucleolytic cleavage to 5'-phosphomonoester.. Functionally, capsid protein (CA) is the structural component of the virus-like particle (VLP), forming the shell that encapsulates the retrotransposons dimeric RNA genome. The particles are assembled from trimer-clustered units and there are holes in the capsid shells that allow for the diffusion of macromolecules. CA also has nucleocapsid-like chaperone activity, promoting primer tRNA(i)-Met annealing to the multipartite primer-binding site (PBS), dimerization of Ty1 RNA and initiation of reverse transcription. In terms of biological role, the aspartyl protease (PR) mediates the proteolytic cleavages of the Gag and Gag-Pol polyproteins after assembly of the VLP. Its function is as follows. Reverse transcriptase/ribonuclease H (RT) is a multifunctional enzyme that catalyzes the conversion of the retro-elements RNA genome into dsDNA within the VLP. The enzyme displays a DNA polymerase activity that can copy either DNA or RNA templates, and a ribonuclease H (RNase H) activity that cleaves the RNA strand of RNA-DNA heteroduplexes during plus-strand synthesis and hydrolyzes RNA primers. The conversion leads to a linear dsDNA copy of the retrotransposon that includes long terminal repeats (LTRs) at both ends. Integrase (IN) targets the VLP to the nucleus, where a subparticle preintegration complex (PIC) containing at least integrase and the newly synthesized dsDNA copy of the retrotransposon must transit the nuclear membrane. Once in the nucleus, integrase performs the integration of the dsDNA into the host genome. This chain is Transposon Ty1-PR1 Gag-Pol polyprotein (TY1B-PR1), found in Saccharomyces cerevisiae (strain ATCC 204508 / S288c) (Baker's yeast).